Here is a 39-residue protein sequence, read N- to C-terminus: Photosystem II reaction center protein J (39 aa).

Residues 7–27 (IPLWLVATIAGLGVIAVLGLF) traverse the membrane as a helical segment.

This sequence belongs to the PsbJ family. PSII is composed of 1 copy each of membrane proteins PsbA, PsbB, PsbC, PsbD, PsbE, PsbF, PsbH, PsbI, PsbJ, PsbK, PsbL, PsbM, PsbT, PsbX, PsbY, PsbZ, Psb30/Ycf12, peripheral proteins PsbO, CyanoQ (PsbQ), PsbU, PsbV and a large number of cofactors. It forms dimeric complexes.

It localises to the cellular thylakoid membrane. One of the components of the core complex of photosystem II (PSII). PSII is a light-driven water:plastoquinone oxidoreductase that uses light energy to abstract electrons from H(2)O, generating O(2) and a proton gradient subsequently used for ATP formation. It consists of a core antenna complex that captures photons, and an electron transfer chain that converts photonic excitation into a charge separation. The polypeptide is Photosystem II reaction center protein J (Microcystis aeruginosa (strain NIES-843 / IAM M-2473)).